Reading from the N-terminus, the 158-residue chain is MKKDEYIKLHQSYLNEYIKFADAKALAIISINGFILNFNFSKRNIKFHNTEDIFNFTAFILLIITIILAAFAVYPRTNNRSEKGIIFWDNINSMGEKEFIEKVKFEKEEELLEKTIQQNYFLAKTASMKYSIIRKVFIISALGYSCLLFSSIFQIICS.

3 helical membrane passes run 20–40 (FADA…NFNF), 53–73 (IFNF…AFAV), and 136–156 (VFII…FQII).

It localises to the cell membrane. Pycsar (pyrimidine cyclase system for antiphage resistance) provides immunity against bacteriophage. The pyrimidine cyclase (PycC) synthesizes cyclic nucleotides in response to infection; these serve as specific second messenger signals. The signals activate the adjacent effector, leading to bacterial cell death and abortive phage infection. A clade E Pycsar system. Functionally, the effector gene of a two-gene Pycsar system. Expression of this and adjacent SaPycC cytidylate cyclase (AC P0DV38) probably confers resistance to bacteriophage. The genes are probably only expressed in response to bacteriophage infection. Probably only responds to cCMP (produced by its cognate NTP cyclase), acts by impairing membrane integrity. The polypeptide is Pycsar effector protein SaPycTM (Staphylococcus aureus).